The sequence spans 295 residues: 2S seed storage protein (295 aa).

An N-terminal signal peptide occupies residues 1-20 (MAKQIVLALAFAALVAFATA). Positions 21-161 (HTTIITTTIE…TITTTVTESN (141 aa)) are excised as a propeptide. Polar residues predominate over residues 195 to 208 (EQQMQQSPRSTRPY). The disordered stretch occupies residues 195 to 215 (EQQMQQSPRSTRPYQQRPGQQ).

Belongs to the 2S seed storage albumins family. The 38 kDa precursor may be cleaved into two polypeptides of approximately the same size. The mature protein is composed of a single polypeptide containing one or more intra-molecular disulfide linkages.

Functionally, this is a 2S seed storage protein. This is 2S seed storage protein (HAG5) from Helianthus annuus (Common sunflower).